The sequence spans 314 residues: Cathepsin L 1 (314 aa).

The first 24 residues, 1–24 (MMLLGASLYLNNTQEVSDEIDTAN), serve as a signal peptide directing secretion. A propeptide spans 25–109 (LYANWKMKYN…NAANSNFQYK (85 aa)) (activation peptide). Disulfide bonds link Cys-132-Cys-175, Cys-166-Cys-207, and Cys-259-Cys-302. Residue Cys-135 is part of the active site. Catalysis depends on residues His-265 and Asn-282.

It belongs to the peptidase C1 family.

The protein resides in the secreted. It carries out the reaction Specificity close to that of papain. As compared to cathepsin B, cathepsin L exhibits higher activity toward protein substrates, but has little activity on Z-Arg-Arg-NHMec, and no peptidyl-dipeptidase activity.. Its function is as follows. May be involved in extracellular digestion. The sequence is that of Cathepsin L 1 from Paramecium tetraurelia.